The chain runs to 743 residues: Conserved oligomeric Golgi complex subunit 8 (743 aa).

Disordered stretches follow at residues 549-672 and 704-743; these read EDGP…TEPE and TQDD…KKDD. Composition is skewed to basic and acidic residues over residues 563-581, 594-621, 633-647, and 654-664; these read ESVK…HGTD, PVKE…HETP, SEAK…HLEL, and QEIREQEHKEV. The span at 704-726 shows a compositional bias: acidic residues; the sequence is TQDDPIEEEEGWGWGDDDGEEQE. Over residues 727–743 the composition is skewed to basic and acidic residues; sequence ISSKEVESPKEKCKKDD.

It belongs to the COG8 family. Component of the conserved oligomeric Golgi complex which is composed of eight different subunits and is required for normal Golgi morphology and localization.

Its subcellular location is the golgi apparatus membrane. Required for normal Golgi function. The polypeptide is Conserved oligomeric Golgi complex subunit 8 (cogc-8) (Caenorhabditis elegans).